Here is a 303-residue protein sequence, read N- to C-terminus: Bifunctional protein FolD (303 aa).

NADP(+) contacts are provided by residues 175–177 (GVS) and Ile243.

This sequence belongs to the tetrahydrofolate dehydrogenase/cyclohydrolase family. In terms of assembly, homodimer.

It catalyses the reaction (6R)-5,10-methylene-5,6,7,8-tetrahydrofolate + NADP(+) = (6R)-5,10-methenyltetrahydrofolate + NADPH. The enzyme catalyses (6R)-5,10-methenyltetrahydrofolate + H2O = (6R)-10-formyltetrahydrofolate + H(+). Its pathway is one-carbon metabolism; tetrahydrofolate interconversion. In terms of biological role, catalyzes the oxidation of 5,10-methylenetetrahydrofolate to 5,10-methenyltetrahydrofolate and then the hydrolysis of 5,10-methenyltetrahydrofolate to 10-formyltetrahydrofolate. The sequence is that of Bifunctional protein FolD from Xanthomonas oryzae pv. oryzae (strain PXO99A).